The primary structure comprises 465 residues: MHEGKITQIIGPVVDVDFVDGQLPSIMDALIVERPDGTELVLETQQHLGEERVRTIAMEATEGLVRGMKVVNTKNPIQTPVGENVLGRMLNVVGKPIDGLGEVHATKTYSIHRPSPAFDELSTKAEMFETGIKVIDLLEPYSRGGKTGLFGGAGVGKTVLIMELINNIAKQQSGYSVFAGVGERTREGNDLWEEMKESGVIDKTALVFGQMNEPPGARARVALTALSIAEYFRDEENRDVLLFVDNIFRFTQAGSEVSALLGRMPSAVGYQPTLATEMGALQERIVSTKKGSITSVQAIYVPADDLTDPAPATTFTHLDATTVLSRSIAELGIYPAVDPLDSTSRILDPNIIGRDHYDTAQAVKQILQRYKDLQDIIAILGMDELSDEDKLLVARARKVQRFLSQPFFVAEQFTGLEGKYVRLEDTIKAFKEIIEGRHDSLPENAFYLVGTIEDAIKKAKQLQNA.

Position 151-158 (151-158 (GGAGVGKT)) interacts with ATP.

Belongs to the ATPase alpha/beta chains family. F-type ATPases have 2 components, CF(1) - the catalytic core - and CF(0) - the membrane proton channel. CF(1) has five subunits: alpha(3), beta(3), gamma(1), delta(1), epsilon(1). CF(0) has four main subunits: a(1), b(1), b'(1) and c(9-12).

The protein resides in the cell inner membrane. It catalyses the reaction ATP + H2O + 4 H(+)(in) = ADP + phosphate + 5 H(+)(out). Functionally, produces ATP from ADP in the presence of a proton gradient across the membrane. The catalytic sites are hosted primarily by the beta subunits. In Chloroherpeton thalassium (strain ATCC 35110 / GB-78), this protein is ATP synthase subunit beta.